The primary structure comprises 460 residues: Xyloglucan 6-xylosyltransferase 1 (460 aa).

Residues 1–20 (MIEKCIGAHRFRRLQRFMRQ) are Cytoplasmic-facing. The chain crosses the membrane as a helical; Signal-anchor for type II membrane protein span at residues 21-40 (GKVTILCLVLTVIVLRGTIG). The Lumenal portion of the chain corresponds to 41–460 (AGKFGTPEKD…KAAKLSTTTT (420 aa)). UDP-alpha-D-xylose contacts are provided by residues G156 and 227–229 (DSD). 2 residues coordinate Mn(2+): D227 and D229. Substrate is bound at residue H346. UDP-alpha-D-xylose-binding residues include H377, G380, and K382. Residue H377 coordinates Mn(2+). Residues K382 and 389–390 (DY) contribute to the substrate site. The N-linked (GlcNAc...) asparagine glycan is linked to N431.

It belongs to the glycosyltransferase 34 family. Forms homodimer. Interacts with XXT2. The cofactor is Mn(2+).

It localises to the golgi apparatus membrane. It carries out the reaction Transfers an alpha-D-xylosyl residue from UDP-D-xylose to a glucose residue in xyloglucan, forming an alpha-(1-&gt;6)-D-xylosyl-D-glucose linkage.. Its pathway is protein modification; protein glycosylation. Functionally, xylosyltransferase specific to UDP-D-xylose that accepts both cellopentaose and cellohexaose as substrates, with a better use of cellohexaose, to produce xyloglucan. Adds preferentially the first xylosyl residue to the fourth glucosyl residue from the reducing end of both acceptors. Transfer one xylose mainly to the second glucose residue from the non-reducing end. The acceptor should have a minimum of four glucose residues. The sequence is that of Xyloglucan 6-xylosyltransferase 1 from Arabidopsis thaliana (Mouse-ear cress).